A 240-amino-acid chain; its full sequence is Phosphoribosylaminoimidazole-succinocarboxamide synthase (240 aa).

This sequence belongs to the SAICAR synthetase family.

It catalyses the reaction 5-amino-1-(5-phospho-D-ribosyl)imidazole-4-carboxylate + L-aspartate + ATP = (2S)-2-[5-amino-1-(5-phospho-beta-D-ribosyl)imidazole-4-carboxamido]succinate + ADP + phosphate + 2 H(+). The protein operates within purine metabolism; IMP biosynthesis via de novo pathway; 5-amino-1-(5-phospho-D-ribosyl)imidazole-4-carboxamide from 5-amino-1-(5-phospho-D-ribosyl)imidazole-4-carboxylate: step 1/2. The sequence is that of Phosphoribosylaminoimidazole-succinocarboxamide synthase from Wolbachia sp. subsp. Brugia malayi (strain TRS).